A 439-amino-acid chain; its full sequence is Putative phosphatidate cytidylyltransferase (439 aa).

The interval 1–37 is disordered; that stretch reads MARKRTNKRNNSDKENGNVGVVQNKDSASSKTTEPAR. Ser-12 is modified (phosphoserine). A compositionally biased stretch (polar residues) spans 24–33; it reads NKDSASSKTT. The next 7 helical transmembrane spans lie at 52–71, 76–98, 110–130, 145–165, 180–199, 245–265, and 321–341; these read FITR…TALA, WVVL…IASV, FINW…SIYA, LVLH…VLFV, FCWT…FMIN, GFLG…YVLM, and FHLA…GFFA.

The protein belongs to the CDS family. Mg(2+) is required as a cofactor.

It localises to the endoplasmic reticulum membrane. It carries out the reaction a 1,2-diacyl-sn-glycero-3-phosphate + CTP + H(+) = a CDP-1,2-diacyl-sn-glycerol + diphosphate. Its pathway is phospholipid metabolism; CDP-diacylglycerol biosynthesis; CDP-diacylglycerol from sn-glycerol 3-phosphate: step 3/3. In terms of biological role, supplies CDP-diacylglycerol, which may play an important role as both a precursor to phosphoinositide biosynthesis in the plasma membrane and as a negative effector of phosphatidylinositol 4-kinase activity, thereby exerting an effect on cell proliferation via a lipid-dependent signal transduction cascade. This is Putative phosphatidate cytidylyltransferase from Schizosaccharomyces pombe (strain 972 / ATCC 24843) (Fission yeast).